The following is a 603-amino-acid chain: Proline--tRNA ligase (603 aa).

This sequence belongs to the class-II aminoacyl-tRNA synthetase family. ProS type 1 subfamily. Homodimer.

The protein resides in the cytoplasm. The catalysed reaction is tRNA(Pro) + L-proline + ATP = L-prolyl-tRNA(Pro) + AMP + diphosphate. In terms of biological role, catalyzes the attachment of proline to tRNA(Pro) in a two-step reaction: proline is first activated by ATP to form Pro-AMP and then transferred to the acceptor end of tRNA(Pro). As ProRS can inadvertently accommodate and process non-cognate amino acids such as alanine and cysteine, to avoid such errors it has two additional distinct editing activities against alanine. One activity is designated as 'pretransfer' editing and involves the tRNA(Pro)-independent hydrolysis of activated Ala-AMP. The other activity is designated 'posttransfer' editing and involves deacylation of mischarged Ala-tRNA(Pro). The misacylated Cys-tRNA(Pro) is not edited by ProRS. This Paenarthrobacter aurescens (strain TC1) protein is Proline--tRNA ligase.